Here is a 152-residue protein sequence, read N- to C-terminus: UPF0225 protein YchJ (152 aa).

This sequence belongs to the UPF0225 family.

The polypeptide is UPF0225 protein YchJ (Escherichia coli O81 (strain ED1a)).